A 185-amino-acid polypeptide reads, in one-letter code: Transcription antitermination protein NusB (185 aa).

This sequence belongs to the NusB family.

Functionally, involved in transcription antitermination. Required for transcription of ribosomal RNA (rRNA) genes. Binds specifically to the boxA antiterminator sequence of the ribosomal RNA (rrn) operons. The polypeptide is Transcription antitermination protein NusB (Rhodospirillum rubrum (strain ATCC 11170 / ATH 1.1.1 / DSM 467 / LMG 4362 / NCIMB 8255 / S1)).